A 1212-amino-acid polypeptide reads, in one-letter code: MVDVNRFKSMQITLASPTKVRSWSYGEVKKPETINYRTLKPEREGLFDEVIFGPTKDWECACGKYKRIRYKGIVCDRCGVEVTRAKVRRERMGHIELKAPVSHIWYFKGIPSRMGLTLDMSPRALEEVIYFAAYVVIDPKETPLERKSLLTEREYREKLQEYGQGSFVAKMGAEAIQDLLKQVDLEAEIAELKEELKTATGQKRFKAVRRLDVLDAFYKSGNKPEWMVLNILPVLPPDLRPMVQLDGGRFAASDLNDLYRRVINRNNRLARLLELGAPGIIVQNEKRMLQEAVDALIDNGRRGRPITGPGSRPLKSLSHMLKGKQGRFRQNLLGKRVDFSGRSVIAVGPTLKMYQCGVPRLMAIELFKPFVMREIVAREYAGNVKAAKRMVERGDERIWDILEDVIKEHPVLLNRAPTLHRLGIQAFEPVLIDGKALRLHPLVCEAYNADFDGDQMAIHVPLSEEAQAEARLLLLAAEHILNPKDGKPVVTPSQDMVLGNYYLTMEDEGREGEGMIFKDIDEAVMAYHNGYVHLHSRVGIAVDSMPDKPWKENQLHKILVTTVGKILFNSIIPSEIPYLQETTNENLTDSTPDKYFLEPGQDIQTVIDSLEINAPFKKKHLGNIIAEIFKRLRTTETSAFLDRLKDLGYYYSTLAGLTVGIADIPVIDNKQEIIDAAHHRVEEINKAFRRGLMTEDDRYVAVTTTWREAKDALEKRLIETQDPKNPIVMMMDSGARGNISNFSQLAGMRGLMAAPNGRIMELPILSNFREGLSVLEMFFSTHGARKGMTDTALKTADSGYLTRRLVDVAQDVIIREDDCGTDRGLVIRAITDGKEVTETLEERLFGRYTKKSVKHPETGEVIVGPDTLITEDMAAAIVNAGVEEVTIRSVFTCKTRHGVCRHCYGINLATGDAVEVGEAVGTIAAQSIGEPGTQLTMRTFHTGGVASNTDITQGLPRIQEIFEARNPKGEAVITEVKGTVIEIEEDAATRTKKVFVQGKTGMGEYVVPFTARMKVEVGDEVHRGEALTEGSIQPKRLLEVRDTLSVETYLLAEVQKVYRSQGVEIGDKHVEVMVRQMLRKVRVMDPGDTDLLPGTLMDISDFTDANKDIVISGGVPATSRPVLLGITKASLETNSFLSAASFQETTRVLTDAAIRGKKDHLIGLKENVIIGKIIPAGTGMARYRNIEPLAVNEVEVIENIAVDEAIVESSED.

4 residues coordinate Zn(2+): cysteine 60, cysteine 62, cysteine 75, and cysteine 78. Mg(2+) contacts are provided by aspartate 450, aspartate 452, and aspartate 454. Positions 819, 893, 900, and 903 each coordinate Zn(2+).

This sequence belongs to the RNA polymerase beta' chain family. In terms of assembly, the RNAP catalytic core consists of 2 alpha, 1 beta, 1 beta' and 1 omega subunit. When a sigma factor is associated with the core the holoenzyme is formed, which can initiate transcription. Requires Mg(2+) as cofactor. The cofactor is Zn(2+).

It catalyses the reaction RNA(n) + a ribonucleoside 5'-triphosphate = RNA(n+1) + diphosphate. Its function is as follows. DNA-dependent RNA polymerase catalyzes the transcription of DNA into RNA using the four ribonucleoside triphosphates as substrates. The sequence is that of DNA-directed RNA polymerase subunit beta' from Streptococcus thermophilus (strain CNRZ 1066).